The sequence spans 631 residues: Dolichyl-diphosphooligosaccharide--protein glycosyltransferase subunit 2 (631 aa).

Positions 1–22 (MAPPGSSAVFLLALTITASVQA) are cleaved as a signal peptide. The Lumenal segment spans residues 23 to 540 (LTPTHYLTKQ…REPEKRPPTV (518 aa)). The N-linked (GlcNAc...) asparagine glycan is linked to N106. A Glycyl lysine isopeptide (Lys-Gly) (interchain with G-Cter in ubiquitin) cross-link involves residue K154. The chain crosses the membrane as a helical span at residues 541-561 (VSNTFTALILSPLLLLFALWI). Residues 562 to 571 (RIGANVSNFT) are Cytoplasmic-facing. A helical transmembrane segment spans residues 572–592 (FAPSTVIFHLGHAAMLGLMYI). Over 593–596 (YWTQ) the chain is Lumenal. The chain crosses the membrane as a helical span at residues 597–617 (LNMFQTLKYLAVLGTVTFLAG). At 618 to 631 (NRMLAQHAVKRTAH) the chain is on the cytoplasmic side.

The protein belongs to the SWP1 family. In terms of assembly, component of the oligosaccharyltransferase (OST) complex. OST exists in two different complex forms which contain common core subunits RPN1, RPN2, OST48, OST4, DAD1 and TMEM258, either STT3A or STT3B as catalytic subunits, and form-specific accessory subunits. STT3A complex assembly occurs through the formation of 3 subcomplexes. Subcomplex 1 contains RPN1 and TMEM258, subcomplex 2 contains the STT3A-specific subunits STT3A, DC2/OSTC, and KCP2 as well as the core subunit OST4, and subcomplex 3 contains RPN2, DAD1, and OST48. The STT3A complex can form stable complexes with the Sec61 complex or with both the Sec61 and TRAP complexes. Interacts with DDI2. Interacts with TMEM35A/NACHO.

Its subcellular location is the endoplasmic reticulum. The protein localises to the endoplasmic reticulum membrane. Its pathway is protein modification; protein glycosylation. Functionally, subunit of the oligosaccharyl transferase (OST) complex that catalyzes the initial transfer of a defined glycan (Glc(3)Man(9)GlcNAc(2) in eukaryotes) from the lipid carrier dolichol-pyrophosphate to an asparagine residue within an Asn-X-Ser/Thr consensus motif in nascent polypeptide chains, the first step in protein N-glycosylation. N-glycosylation occurs cotranslationally and the complex associates with the Sec61 complex at the channel-forming translocon complex that mediates protein translocation across the endoplasmic reticulum (ER). All subunits are required for a maximal enzyme activity. The protein is Dolichyl-diphosphooligosaccharide--protein glycosyltransferase subunit 2 of Mus musculus (Mouse).